Consider the following 495-residue polypeptide: Glycerol kinase (495 aa).

Thr14 serves as a coordination point for ADP. Residues Thr14, Thr15, and Ser16 each coordinate ATP. Thr14 serves as a coordination point for sn-glycerol 3-phosphate. Residue Arg18 participates in ADP binding. Sn-glycerol 3-phosphate-binding residues include Arg84, Glu85, Tyr136, and Asp246. Arg84, Glu85, Tyr136, Asp246, and Gln247 together coordinate glycerol. 2 residues coordinate ADP: Thr268 and Gly312. Thr268, Gly312, Gln316, and Gly413 together coordinate ATP. ADP-binding residues include Gly413 and Asn417.

It belongs to the FGGY kinase family.

It carries out the reaction glycerol + ATP = sn-glycerol 3-phosphate + ADP + H(+). It participates in polyol metabolism; glycerol degradation via glycerol kinase pathway; sn-glycerol 3-phosphate from glycerol: step 1/1. With respect to regulation, inhibited by fructose 1,6-bisphosphate (FBP). Functionally, key enzyme in the regulation of glycerol uptake and metabolism. Catalyzes the phosphorylation of glycerol to yield sn-glycerol 3-phosphate. This is Glycerol kinase from Bdellovibrio bacteriovorus (strain ATCC 15356 / DSM 50701 / NCIMB 9529 / HD100).